A 109-amino-acid chain; its full sequence is Iron-sulfur cluster assembly protein CyaY (109 aa).

It belongs to the frataxin family.

Involved in iron-sulfur (Fe-S) cluster assembly. May act as a regulator of Fe-S biogenesis. The protein is Iron-sulfur cluster assembly protein CyaY of Bordetella petrii (strain ATCC BAA-461 / DSM 12804 / CCUG 43448).